A 593-amino-acid polypeptide reads, in one-letter code: Kelch-like protein 2 (593 aa).

Residues 1-28 are disordered; that stretch reads METPPLPPACTKQGHQKPLDSKDDNTEK. Over residues 17 to 28 the composition is skewed to basic and acidic residues; that stretch reads KPLDSKDDNTEK. The 68-residue stretch at 56–123 folds into the BTB domain; it reads CDVTIVAEDM…VYTAEIQVTE (68 aa). Kelch repeat units lie at residues 308–353, 354–400, 402–447, 449–496, 497–543, and 545–591; these read LMVV…YMAG, LVFA…VLNG, LYAV…VVGG, LYAV…VLNN, LLYA…AVNG, and LYVV…VIDK.

Component of the BCR(KLHL2) E3 ubiquitin ligase complex, at least composed of CUL3 and KLHL2 and RBX1. Binds actin. Interacts with KLHL12. Interacts (via N-terminus) with FYN (via SH3 domain). Ubiquitous. Detected throughout the brain.

It is found in the cytoplasm. It localises to the cytoskeleton. Its subcellular location is the cell projection. The protein resides in the ruffle. The protein localises to the lamellipodium. It is found in the cytosol. It participates in protein modification; protein ubiquitination. Its function is as follows. Substrate-specific adapter of a BCR (BTB-CUL3-RBX1) E3 ubiquitin ligase complex that mediates the ubiquitination of target proteins, such as NPTXR, WNK1, WNK3 and WNK4, leading most often to their proteasomal degradation. The BCR(KLHL2) complex catalyzes ubiquitination and degradation of NPTXR. Responsible for degradative ubiquitination of the WNK kinases WNK1, WNK3 and WNK4. Plays a role in the reorganization of the actin cytoskeleton. Promotes growth of cell projections in oligodendrocyte precursors. This is Kelch-like protein 2 from Homo sapiens (Human).